The sequence spans 430 residues: Enolase (430 aa).

Residue Gln-164 participates in (2R)-2-phosphoglycerate binding. The active-site Proton donor is the Glu-208. Asp-245, Glu-288, and Asp-315 together coordinate Mg(2+). (2R)-2-phosphoglycerate-binding residues include Lys-340, Arg-369, Ser-370, and Lys-391. Catalysis depends on Lys-340, which acts as the Proton acceptor.

Belongs to the enolase family. The cofactor is Mg(2+).

It is found in the cytoplasm. It localises to the secreted. The protein resides in the cell surface. The catalysed reaction is (2R)-2-phosphoglycerate = phosphoenolpyruvate + H2O. It participates in carbohydrate degradation; glycolysis; pyruvate from D-glyceraldehyde 3-phosphate: step 4/5. In terms of biological role, catalyzes the reversible conversion of 2-phosphoglycerate (2-PG) into phosphoenolpyruvate (PEP). It is essential for the degradation of carbohydrates via glycolysis. This is Enolase from Pyrococcus furiosus (strain ATCC 43587 / DSM 3638 / JCM 8422 / Vc1).